Consider the following 310-residue polypeptide: tRNA pseudouridine synthase B (310 aa).

Asp-37 acts as the Nucleophile in catalysis.

This sequence belongs to the pseudouridine synthase TruB family. Type 1 subfamily.

The enzyme catalyses uridine(55) in tRNA = pseudouridine(55) in tRNA. Functionally, responsible for synthesis of pseudouridine from uracil-55 in the psi GC loop of transfer RNAs. The sequence is that of tRNA pseudouridine synthase B from Deinococcus deserti (strain DSM 17065 / CIP 109153 / LMG 22923 / VCD115).